The following is a 239-amino-acid chain: Purine nucleoside phosphorylase DeoD-type (239 aa).

His-5 lines the a purine D-ribonucleoside pocket. Gly-21 and Arg-25 together coordinate phosphate. An N6-acetyllysine modification is found at Lys-27. Residues Arg-44 and 88–91 (RVGS) each bind phosphate. A purine D-ribonucleoside-binding positions include 180–182 (EME) and 204–205 (SD). Catalysis depends on Asp-205, which acts as the Proton donor.

The protein belongs to the PNP/UDP phosphorylase family. In terms of assembly, homohexamer; trimer of homodimers.

The enzyme catalyses a purine D-ribonucleoside + phosphate = a purine nucleobase + alpha-D-ribose 1-phosphate. It catalyses the reaction a purine 2'-deoxy-D-ribonucleoside + phosphate = a purine nucleobase + 2-deoxy-alpha-D-ribose 1-phosphate. In terms of biological role, catalyzes the reversible phosphorolytic breakdown of the N-glycosidic bond in the beta-(deoxy)ribonucleoside molecules, with the formation of the corresponding free purine bases and pentose-1-phosphate. This chain is Purine nucleoside phosphorylase DeoD-type, found in Escherichia coli O8 (strain IAI1).